Consider the following 198-residue polypeptide: Dynein light chain Tctex-type protein 2 (198 aa).

The segment at 1–34 (MEKRGRGVKSSPIQTPNQTPQQAPVTPRKERRPS) is disordered. Residues 11–24 (SPIQTPNQTPQQAP) show a composition bias toward polar residues.

This sequence belongs to the dynein light chain Tctex-type family. In terms of assembly, interacts with CCDC159. Interacts with CSNK2B. As to expression, expressed predominantly in testis. Also expressed in brain, lung and trachea.

The protein resides in the cytoplasm. The protein localises to the cytoskeleton. It localises to the cytoplasmic granule. It is found in the membrane. In terms of biological role, may be an accessory component of axonemal dynein and cytoplasmic dynein 1. Candidate for involvement in male sterility. This Homo sapiens (Human) protein is Dynein light chain Tctex-type protein 2.